We begin with the raw amino-acid sequence, 242 residues long: Lactate utilization protein A 2 (242 aa).

It belongs to the LutA/YkgE family.

Functionally, is involved in L-lactate degradation and allows cells to grow with lactate as the sole carbon source. This chain is Lactate utilization protein A 2, found in Bacillus cereus (strain 03BB102).